The primary structure comprises 460 residues: Nucleosome assembly protein 1-like 2 (460 aa).

2 stretches are compositionally biased toward basic and acidic residues: residues 1–11 (MAESENRKELS) and 27–36 (LGEHLERGED). 2 disordered regions span residues 1 to 88 (MAES…ADRP) and 214 to 238 (EEEE…EDPK). Acidic residues predominate over residues 214–236 (EEEEEEEEDDIEATGEENKEEED). Residues 346–352 (IKKKQKH) carry the Nuclear localization signal motif.

It belongs to the nucleosome assembly protein (NAP) family.

It localises to the nucleus. Functionally, acidic protein which may be involved in interactions with other proteins or DNA. This is Nucleosome assembly protein 1-like 2 (NAP1L2) from Homo sapiens (Human).